We begin with the raw amino-acid sequence, 480 residues long: Pyruvate kinase (480 aa).

Arginine 36 is a substrate binding site. Asparagine 38, serine 40, and aspartate 70 together coordinate K(+). Position 38 to 41 (38 to 41 (NFSH)) interacts with ATP. 2 residues coordinate ATP: arginine 77 and lysine 160. Glutamate 225 provides a ligand contact to Mg(2+). Residues glycine 251, aspartate 252, and threonine 284 each coordinate substrate. A Mg(2+)-binding site is contributed by aspartate 252.

This sequence belongs to the pyruvate kinase family. In terms of assembly, homotetramer. It depends on Mg(2+) as a cofactor. Requires K(+) as cofactor.

The enzyme catalyses pyruvate + ATP = phosphoenolpyruvate + ADP + H(+). It participates in carbohydrate degradation; glycolysis; pyruvate from D-glyceraldehyde 3-phosphate: step 5/5. Allosterically activated by AMP and by several sugar phosphates. Belongs to type II PK. The polypeptide is Pyruvate kinase (pykA) (Buchnera aphidicola subsp. Acyrthosiphon pisum (strain APS) (Acyrthosiphon pisum symbiotic bacterium)).